An 88-amino-acid polypeptide reads, in one-letter code: Small ribosomal subunit protein uS15 (88 aa).

The span at 1-12 (MITQEEQQKIID) shows a compositional bias: basic and acidic residues. Positions 1 to 24 (MITQEEQQKIIDRFGNGPNDTGTP) are disordered.

The protein belongs to the universal ribosomal protein uS15 family. Part of the 30S ribosomal subunit. Forms a bridge to the 50S subunit in the 70S ribosome, contacting the 23S rRNA.

Functionally, one of the primary rRNA binding proteins, it binds directly to 16S rRNA where it helps nucleate assembly of the platform of the 30S subunit by binding and bridging several RNA helices of the 16S rRNA. Its function is as follows. Forms an intersubunit bridge (bridge B4) with the 23S rRNA of the 50S subunit in the ribosome. In Salinibacter ruber (strain DSM 13855 / M31), this protein is Small ribosomal subunit protein uS15.